The chain runs to 462 residues: Trigger factor (462 aa).

Residues 163–259 enclose the PPIase FKBP-type domain; sequence TDYVNIDLQR…VNDVKRRDLP (97 aa). Residues 439–462 are disordered; sequence SREEFEEEMQQQQQQQAQRQRMAP. A compositionally biased stretch (low complexity) spans 448-462; sequence QQQQQQQAQRQRMAP.

Belongs to the FKBP-type PPIase family. Tig subfamily.

Its subcellular location is the cytoplasm. It catalyses the reaction [protein]-peptidylproline (omega=180) = [protein]-peptidylproline (omega=0). Its function is as follows. Involved in protein export. Acts as a chaperone by maintaining the newly synthesized protein in an open conformation. Functions as a peptidyl-prolyl cis-trans isomerase. This is Trigger factor from Salinibacter ruber (strain DSM 13855 / M31).